A 360-amino-acid polypeptide reads, in one-letter code: Ferredoxin--NADP reductase 1 (360 aa).

FAD contacts are provided by Asp-43, Gln-51, Tyr-56, Ala-96, Phe-141, Asp-307, and Ser-348.

The protein belongs to the ferredoxin--NADP reductase type 2 family. In terms of assembly, homodimer. It depends on FAD as a cofactor.

It catalyses the reaction 2 reduced [2Fe-2S]-[ferredoxin] + NADP(+) + H(+) = 2 oxidized [2Fe-2S]-[ferredoxin] + NADPH. This chain is Ferredoxin--NADP reductase 1, found in Cupriavidus taiwanensis (strain DSM 17343 / BCRC 17206 / CCUG 44338 / CIP 107171 / LMG 19424 / R1) (Ralstonia taiwanensis (strain LMG 19424)).